The sequence spans 546 residues: Methionine--tRNA ligase (546 aa).

The 'HIGH' region signature appears at 15-25 (PYANGPIHLGH). Cys-146, Cys-149, Cys-159, and Cys-162 together coordinate Zn(2+). Residues 332–336 (KMSKS) carry the 'KMSKS' region motif. Position 335 (Lys-335) interacts with ATP.

It belongs to the class-I aminoacyl-tRNA synthetase family. MetG type 1 subfamily. As to quaternary structure, monomer. Zn(2+) serves as cofactor.

The protein localises to the cytoplasm. It carries out the reaction tRNA(Met) + L-methionine + ATP = L-methionyl-tRNA(Met) + AMP + diphosphate. In terms of biological role, is required not only for elongation of protein synthesis but also for the initiation of all mRNA translation through initiator tRNA(fMet) aminoacylation. This Coxiella burnetii (strain Dugway 5J108-111) protein is Methionine--tRNA ligase.